A 302-amino-acid chain; its full sequence is Stanniocalcin-2 (302 aa).

Positions 1-24 are cleaved as a signal peptide; it reads MCAERLGHFMTLALVLATIDPARG. Positions 23–44 are disordered; sequence RGTDATNPPEGPQDRSSQQKGR. An N-linked (GlcNAc...) asparagine glycan is attached at Asn-73. A disordered region spans residues 218–302; sequence PPTAPPERQP…EQSEYSDIRR (85 aa). Basic and acidic residues predominate over residues 227–264; sequence PQVDRAKLSRAHHGEAGHHLPEPSSRETGRGAKGERGS. Residues Ser-250 and Ser-251 each carry the phosphoserine modification. A Phosphothreonine modification is found at Thr-254.

The protein belongs to the stanniocalcin family. As to quaternary structure, homodimer; disulfide-linked.

The protein resides in the secreted. Functionally, has an anti-hypocalcemic action on calcium and phosphate homeostasis. The sequence is that of Stanniocalcin-2 (STC2) from Macaca nemestrina (Pig-tailed macaque).